The primary structure comprises 581 residues: Bifunctional lycopene cyclase/phytoene synthase (581 aa).

The tract at residues 1–243 is lycopene beta-cyclase; that stretch reads MGFDYALVHL…IVFGQLAFDN (243 aa). The next 7 helical transmembrane spans lie at 3 to 23, 35 to 55, 65 to 85, 120 to 140, 152 to 172, 173 to 193, and 221 to 241; these read FDYA…LTLL, KVAF…SYLI, HVII…FFVV, LKRL…WFCV, ILIW…QFII, GLPF…LWIV, and IEEA…QLAF. Residues 250-581 form a phytoene synthase region; that stretch reads AFPHLFPDPS…RVLVAWRTLN (332 aa).

It in the N-terminal section; belongs to the lycopene beta-cyclase family. In the C-terminal section; belongs to the phytoene/squalene synthase family.

The protein resides in the membrane. The catalysed reaction is all-trans-lycopene = gamma-carotene. The enzyme catalyses gamma-carotene = all-trans-beta-carotene. It carries out the reaction 2 (2E,6E,10E)-geranylgeranyl diphosphate = 15-cis-phytoene + 2 diphosphate. Its pathway is carotenoid biosynthesis; beta-carotene biosynthesis. It functions in the pathway carotenoid biosynthesis; phytoene biosynthesis; all-trans-phytoene from geranylgeranyl diphosphate: step 1/1. Its function is as follows. Bifunctional enzyme that catalyzes the reactions from geranylgeranyl diphosphate to phytoene (phytoene synthase) and lycopene to beta-carotene via the intermediate gamma-carotene (lycopene cyclase). The chain is Bifunctional lycopene cyclase/phytoene synthase from Leptosphaeria maculans (strain JN3 / isolate v23.1.3 / race Av1-4-5-6-7-8) (Blackleg fungus).